Here is a 381-residue protein sequence, read N- to C-terminus: MYG1 exonuclease (381 aa).

The transit peptide at 1–47 directs the protein to the mitochondrion; that stretch reads MGRGFLRGVLTLLPLRSVLQVQHCMLVSEPDLPPKRPRNNLMAPPRI. An N6-acetyllysine mark is found at Lys267 and Lys273.

Belongs to the MYG1 family.

It localises to the nucleus. It is found in the nucleoplasm. Its subcellular location is the mitochondrion matrix. The protein localises to the nucleolus. In terms of biological role, 3'-5' RNA exonuclease which cleaves in situ on specific transcripts in both nucleus and mitochondrion. Involved in regulating spatially segregated organellar RNA processing, acts as a coordinator of nucleo-mitochondrial crosstalk. In nucleolus, processes pre-ribosomal RNA involved in ribosome assembly and alters cytoplasmic translation. In mitochondrial matrix, processes 3'-termini of the mito-ribosomal and messenger RNAs and controls translation of mitochondrial proteins. This is MYG1 exonuclease from Rattus norvegicus (Rat).